Consider the following 182-residue polypeptide: Lipid A acyltransferase PagP (182 aa).

The signal sequence occupies residues 1-21 (MTQYFRALAFFLLLVPATAMA). Cys-22 is lipidated: N-palmitoyl cysteine. The S-diacylglycerol cysteine moiety is linked to residue Cys-22. Active-site residues include His-55, Asp-98, and Ser-99.

Belongs to the lipid A palmitoyltransferase family. As to quaternary structure, homodimer.

The protein resides in the cell outer membrane. It carries out the reaction a lipid A + a 1,2-diacyl-sn-glycero-3-phosphocholine = a hepta-acyl lipid A + a 2-acyl-sn-glycero-3-phosphocholine. The enzyme catalyses a lipid IVA + a 1,2-diacyl-sn-glycero-3-phosphocholine = a lipid IVB + a 2-acyl-sn-glycero-3-phosphocholine. It catalyses the reaction a lipid IIA + a 1,2-diacyl-sn-glycero-3-phosphocholine = a lipid IIB + a 2-acyl-sn-glycero-3-phosphocholine. Transfers a fatty acid residue from the sn-1 position of a phospholipid to the N-linked hydroxyfatty acid chain on the proximal unit of lipid A or its precursors. Required for resistance to cationic antimicrobial peptides (CAMPs). Modifications of lipid A with an acyl chain to evade host immune defenses by resisting antibody-mediated complement lysis during respiratory infection. The polypeptide is Lipid A acyltransferase PagP (Bordetella bronchiseptica (strain ATCC BAA-588 / NCTC 13252 / RB50) (Alcaligenes bronchisepticus)).